A 294-amino-acid polypeptide reads, in one-letter code: Protease HtpX (294 aa).

The next 2 membrane-spanning stretches (helical) occupy residues 4–24 (ILLF…ILFI) and 33–53 (FGLI…SLLL). Zn(2+) is bound at residue histidine 139. Glutamate 140 is a catalytic residue. Histidine 143 lines the Zn(2+) pocket. The next 2 helical transmembrane spans lie at 147–167 (GDMI…IFLS) and 197–217 (FFIS…ITFW). Zn(2+) is bound at residue glutamate 223.

It belongs to the peptidase M48B family. It depends on Zn(2+) as a cofactor.

Its subcellular location is the cell membrane. The protein is Protease HtpX of Wigglesworthia glossinidia brevipalpis.